The primary structure comprises 271 residues: Phosphonoacetaldehyde hydrolase (271 aa).

Catalysis depends on aspartate 12, which acts as the Nucleophile. 2 residues coordinate Mg(2+): aspartate 12 and alanine 14. Lysine 54 acts as the Schiff-base intermediate with substrate in catalysis. Residue aspartate 188 participates in Mg(2+) binding.

Belongs to the HAD-like hydrolase superfamily. PhnX family. In terms of assembly, homodimer. Requires Mg(2+) as cofactor.

The catalysed reaction is phosphonoacetaldehyde + H2O = acetaldehyde + phosphate + H(+). Functionally, involved in phosphonate degradation. The sequence is that of Phosphonoacetaldehyde hydrolase from Aliivibrio salmonicida (strain LFI1238) (Vibrio salmonicida (strain LFI1238)).